The primary structure comprises 378 residues: 3-hydroxyisobutyryl-CoA hydrolase 1 (378 aa).

Ala2 is subject to N-acetylalanine. Substrate-binding residues include Glu94, Gly119, Glu142, and Asp150.

It belongs to the enoyl-CoA hydratase/isomerase family. Expressed in roots, leaves, flowers and siliques.

It localises to the peroxisome. It carries out the reaction 3-hydroxy-2-methylpropanoyl-CoA + H2O = 3-hydroxy-2-methylpropanoate + CoA + H(+). Its pathway is amino-acid degradation; L-valine degradation. With respect to regulation, inhibited by copper. Involved in valine catabolism. May be indirectly involved in benzoic acid biosynthesis and in cold signaling and cold tolerance. This is 3-hydroxyisobutyryl-CoA hydrolase 1 (CHY1) from Arabidopsis thaliana (Mouse-ear cress).